A 399-amino-acid chain; its full sequence is Phosphoglycerate kinase (399 aa).

Residues aspartate 21 to asparagine 23, arginine 36, histidine 59 to arginine 62, arginine 120, and arginine 158 contribute to the substrate site. ATP is bound by residues lysine 209, glycine 297, glutamate 328, and glycine 355–serine 358.

This sequence belongs to the phosphoglycerate kinase family. Monomer.

The protein resides in the cytoplasm. The catalysed reaction is (2R)-3-phosphoglycerate + ATP = (2R)-3-phospho-glyceroyl phosphate + ADP. It participates in carbohydrate degradation; glycolysis; pyruvate from D-glyceraldehyde 3-phosphate: step 2/5. In Streptococcus thermophilus (strain ATCC BAA-491 / LMD-9), this protein is Phosphoglycerate kinase.